The primary structure comprises 501 residues: Proline--tRNA ligase (501 aa).

The protein belongs to the class-II aminoacyl-tRNA synthetase family.

The catalysed reaction is tRNA(Pro) + L-proline + ATP = L-prolyl-tRNA(Pro) + AMP + diphosphate. The chain is Proline--tRNA ligase from Encephalitozoon cuniculi (strain GB-M1) (Microsporidian parasite).